We begin with the raw amino-acid sequence, 727 residues long: Protein EXECUTER 1, chloroplastic (727 aa).

4 disordered regions span residues 1 to 51, 65 to 102, 340 to 381, and 413 to 455; these read MAAA…SRLF, LAGA…AGSG, ISSS…LPSD, and DEDD…SGDE. A chloroplast-targeting transit peptide spans 1-83; that stretch reads MAAAVSTAPR…PRRRVSSVVR (83 aa). 2 stretches are compositionally biased toward low complexity: residues 19-33 and 42-51; these read SSSC…ASMS and PSSGSGSRLF. The segment covering 413-441 has biased composition (acidic residues); it reads DEDDENDNPEDEIESSEDIGDGDNVEEAE.

The protein localises to the plastid. Its subcellular location is the chloroplast. Its function is as follows. Together with EX2, enables higher plants to perceive singlet oxygen as a stress signal in plastid that activates a genetically determined nuclear stress response program which triggers a programmed cell death (PCD). This transfer of singlet oxygen-induced stress-related signals from the plastid to the nucleus that triggers genetically controlled PCD pathway is unique to photosynthetic eukaryotes and operates under mild stress conditions, impeding photosystem II (PSII) without causing photooxidative damage of the plant. This is Protein EXECUTER 1, chloroplastic from Oryza sativa subsp. japonica (Rice).